Consider the following 312-residue polypeptide: Ribonuclease H2 subunit B (312 aa).

A2 is modified (N-acetylalanine). The disordered stretch occupies residues 236 to 256 (EPSASLPNPPSKKIKLSDEPV). Residue K295 is modified to N6-acetyllysine. The residue at position 296 (S296) is a Phosphoserine.

Belongs to the RNase H2 subunit B family. The RNase H2 complex is a heterotrimer composed of the catalytic subunit RNASEH2A and the non-catalytic subunits RNASEH2B and RNASEH2C. As to expression, widely expressed.

Its subcellular location is the nucleus. Its function is as follows. Non catalytic subunit of RNase H2, an endonuclease that specifically degrades the RNA of RNA:DNA hybrids. Participates in DNA replication, possibly by mediating the removal of lagging-strand Okazaki fragment RNA primers during DNA replication. Mediates the excision of single ribonucleotides from DNA:RNA duplexes. This is Ribonuclease H2 subunit B (RNASEH2B) from Homo sapiens (Human).